A 75-amino-acid polypeptide reads, in one-letter code: Small ribosomal subunit protein bS18 (75 aa).

It belongs to the bacterial ribosomal protein bS18 family. In terms of assembly, part of the 30S ribosomal subunit. Forms a tight heterodimer with protein bS6.

In terms of biological role, binds as a heterodimer with protein bS6 to the central domain of the 16S rRNA, where it helps stabilize the platform of the 30S subunit. The sequence is that of Small ribosomal subunit protein bS18 from Shewanella loihica (strain ATCC BAA-1088 / PV-4).